The sequence spans 122 residues: MAYDKQALIDQLGQLTIMELADLIDGLKETWGVTAAVAVSGGGAGAASPAAEEKTEFDVVLIDAGASKINVIKEIRGITGLGLKEAKDMSEKGGVLKEGVAKDEAEKMKAQLEAAGARVELK.

This sequence belongs to the bacterial ribosomal protein bL12 family. As to quaternary structure, homodimer. Part of the ribosomal stalk of the 50S ribosomal subunit. Forms a multimeric L10(L12)X complex, where L10 forms an elongated spine to which 2 to 4 L12 dimers bind in a sequential fashion. Binds GTP-bound translation factors.

Forms part of the ribosomal stalk which helps the ribosome interact with GTP-bound translation factors. Is thus essential for accurate translation. The polypeptide is Large ribosomal subunit protein bL12 (Deinococcus radiodurans (strain ATCC 13939 / DSM 20539 / JCM 16871 / CCUG 27074 / LMG 4051 / NBRC 15346 / NCIMB 9279 / VKM B-1422 / R1)).